Consider the following 50-residue polypeptide: Mast cell degranulating peptide (50 aa).

Residues 1 to 27 (MISMLRCTFFFVSVILITSYFVTPTMS) form the signal peptide. The residue at position 29 (K29) is an N6-formyllysine. A disulfide bond links C30 and C42. N6-formyllysine occurs at positions 44 and 48. An Asparagine amide modification is found at N49.

Expressed by the venom gland.

It localises to the secreted. In terms of biological role, potent anti-inflammatory agent. At low concentrations, mediates the degranulation of mast cells thus evoking an inflammatory response. Also acts as a neurotoxin capable of blocking a class of voltage-gated potassium channels. The chain is Mast cell degranulating peptide from Apis cerana cerana (Oriental honeybee).